The primary structure comprises 71 residues: Guanine nucleotide-binding protein G(I)/G(S)/G(O) subunit gamma-2 (71 aa).

Alanine 2 is modified (N-acetylalanine). Cysteine 68 is subject to Cysteine methyl ester. Residue cysteine 68 is the site of S-geranylgeranyl cysteine attachment. Positions 69–71 (AIL) are cleaved as a propeptide — removed in mature form.

Belongs to the G protein gamma family. As to quaternary structure, g proteins are composed of 3 units, alpha, beta and gamma. In this context, interacts with GNB2. The heterodimer formed by GNB1 and GNG2 interacts with ARHGEF5. The heterodimer formed by GNB1 and GNG2 interacts with GRK2. Component of the TAS2R14-GNAI1 complex, consisting of TAS2R14, GNAI1, GNB1 and GNG2. Forms complexes with TAS2R14 and G-proteins; these complexes play a role in the perception of bitterness. Component of the TAS2R14-GNAT3 complex, consisting of TAS2R14, GNAT3, GNB1 and GNG2. Component of the TAS2R14-GNAS2 complex, consisting of TAS2R14, GNAS2, GNB1 and GNG2. In terms of tissue distribution, adrenal gland and brain.

The protein resides in the cell membrane. Its function is as follows. Guanine nucleotide-binding proteins (G proteins) are involved as a modulator or transducer in various transmembrane signaling systems. The beta and gamma chains are required for the GTPase activity, for replacement of GDP by GTP, and for G protein-effector interaction. The protein is Guanine nucleotide-binding protein G(I)/G(S)/G(O) subunit gamma-2 (GNG2) of Bos taurus (Bovine).